A 226-amino-acid chain; its full sequence is Urease accessory protein UreF (226 aa).

It belongs to the UreF family. As to quaternary structure, ureD, UreF and UreG form a complex that acts as a GTP-hydrolysis-dependent molecular chaperone, activating the urease apoprotein by helping to assemble the nickel containing metallocenter of UreC. The UreE protein probably delivers the nickel.

It localises to the cytoplasm. Its function is as follows. Required for maturation of urease via the functional incorporation of the urease nickel metallocenter. The polypeptide is Urease accessory protein UreF (Paraburkholderia phymatum (strain DSM 17167 / CIP 108236 / LMG 21445 / STM815) (Burkholderia phymatum)).